The following is a 354-amino-acid chain: UDP-N-acetylglucosamine--N-acetylmuramyl-(pentapeptide) pyrophosphoryl-undecaprenol N-acetylglucosamine transferase (354 aa).

UDP-N-acetyl-alpha-D-glucosamine-binding positions include threonine 11–glycine 13, arginine 164, serine 194, and glutamine 289.

It belongs to the glycosyltransferase 28 family. MurG subfamily.

Its subcellular location is the cell membrane. It catalyses the reaction di-trans,octa-cis-undecaprenyl diphospho-N-acetyl-alpha-D-muramoyl-L-alanyl-D-glutamyl-meso-2,6-diaminopimeloyl-D-alanyl-D-alanine + UDP-N-acetyl-alpha-D-glucosamine = di-trans,octa-cis-undecaprenyl diphospho-[N-acetyl-alpha-D-glucosaminyl-(1-&gt;4)]-N-acetyl-alpha-D-muramoyl-L-alanyl-D-glutamyl-meso-2,6-diaminopimeloyl-D-alanyl-D-alanine + UDP + H(+). It functions in the pathway cell wall biogenesis; peptidoglycan biosynthesis. Its function is as follows. Cell wall formation. Catalyzes the transfer of a GlcNAc subunit on undecaprenyl-pyrophosphoryl-MurNAc-pentapeptide (lipid intermediate I) to form undecaprenyl-pyrophosphoryl-MurNAc-(pentapeptide)GlcNAc (lipid intermediate II). This Clostridium botulinum (strain Kyoto / Type A2) protein is UDP-N-acetylglucosamine--N-acetylmuramyl-(pentapeptide) pyrophosphoryl-undecaprenol N-acetylglucosamine transferase.